Here is a 327-residue protein sequence, read N- to C-terminus: Flotillin-like protein FloA (327 aa).

The helical transmembrane segment at 7 to 27 (FLVPILIVILLLVFFSLVPVG) threads the bilayer.

It belongs to the flotillin-like FloA family. In terms of assembly, homooligomerizes.

The protein resides in the cell membrane. Its subcellular location is the membrane raft. Functionally, found in functional membrane microdomains (FMM) that may be equivalent to eukaryotic membrane rafts. FMMs are highly dynamic and increase in number as cells age. Flotillins are thought to be important factors in membrane fluidity. This Finegoldia magna (strain ATCC 29328 / DSM 20472 / WAL 2508) (Peptostreptococcus magnus) protein is Flotillin-like protein FloA.